The primary structure comprises 192 residues: MAREREGRRRDDREERDSEFVDKLVHINRVAKVVKGGRRFGFAALVVVGDQKGRVGFGHGKAREVPEAIRKATEAAKRGLIRVSLREGRTLHHDVNGRHGAGKVILRAAPQGTGIIAGGPMRAVFETLGMQDVVAKSLGSSNPYNLVRATFDALKNEDSPRSVAARRGLKVSALQARRRDADPADTSEAAVA.

Residues 20 to 83 form the S5 DRBM domain; the sequence is FVDKLVHINR…EAAKRGLIRV (64 aa). The segment at 162 to 192 is disordered; sequence SVAARRGLKVSALQARRRDADPADTSEAAVA.

Belongs to the universal ribosomal protein uS5 family. Part of the 30S ribosomal subunit. Contacts proteins S4 and S8.

Functionally, with S4 and S12 plays an important role in translational accuracy. Located at the back of the 30S subunit body where it stabilizes the conformation of the head with respect to the body. The polypeptide is Small ribosomal subunit protein uS5 (Methylorubrum extorquens (strain CM4 / NCIMB 13688) (Methylobacterium extorquens)).